The primary structure comprises 556 residues: MNIVEQMKDVLKQEIKEAVMKAGLAEESEIPEVVLEVPKDKSHGDYSTNMAMQLARIAKKAPRNIAEEIVASFDKGKASIDKLDIAGPGFINFYMNNQYLTKLIPAVLEAGEAYGETNIGGGERVQVEFVSANPTGNLHLGHARGAAVGDSLCNVLEKAGYEVSREYYINDAGNQINNLALSVEARYFQALGKDKPMPEDGYHGEDIKEIGQKLADEFGDRFVHEEESERLAFFREYGLKYELGKLREDLENFRVPFDVWYSETSLYQNGKIDQALEALREKGHIYEEDGATWFRSTAFGDDKDRVLIKKDGSYTYLLPDIAYHKDKLDRGFQKLINVWGADHHGYIPRMKAAIEALGYDKETLEVEIIQLVHLYKNGEKMKMSKRTGKAVTMRDLIDEVGLDAVRYFFAMRSADTHMDFDLDLAVSTSNENPVYYAQYAHARICSMLRQGEEKGISFEGNLDLTKIGSEKEYDLLKVIGSFPEAVADAAEKRIPHRITNYIFELASVLHSFYNAEKVLDPADEEKSRARLSLMKATQITLNNALKLIGVSAPEKM.

Residues 132–142 carry the 'HIGH' region motif; that stretch reads ANPTGNLHLGH.

The protein belongs to the class-I aminoacyl-tRNA synthetase family. Monomer.

The protein localises to the cytoplasm. It carries out the reaction tRNA(Arg) + L-arginine + ATP = L-arginyl-tRNA(Arg) + AMP + diphosphate. The polypeptide is Arginine--tRNA ligase (Bacillus licheniformis (strain ATCC 14580 / DSM 13 / JCM 2505 / CCUG 7422 / NBRC 12200 / NCIMB 9375 / NCTC 10341 / NRRL NRS-1264 / Gibson 46)).